A 140-amino-acid chain; its full sequence is Nucleoside diphosphate kinase (140 aa).

The ATP site is built by lysine 11, phenylalanine 59, arginine 87, threonine 93, arginine 104, and asparagine 114. Histidine 117 serves as the catalytic Pros-phosphohistidine intermediate.

The protein belongs to the NDK family. Homotetramer. It depends on Mg(2+) as a cofactor.

It localises to the cytoplasm. It carries out the reaction a 2'-deoxyribonucleoside 5'-diphosphate + ATP = a 2'-deoxyribonucleoside 5'-triphosphate + ADP. The catalysed reaction is a ribonucleoside 5'-diphosphate + ATP = a ribonucleoside 5'-triphosphate + ADP. Major role in the synthesis of nucleoside triphosphates other than ATP. The ATP gamma phosphate is transferred to the NDP beta phosphate via a ping-pong mechanism, using a phosphorylated active-site intermediate. The chain is Nucleoside diphosphate kinase from Persephonella marina (strain DSM 14350 / EX-H1).